Consider the following 640-residue polypeptide: ATP-dependent DNA helicase YoaA (640 aa).

The 263-residue stretch at 16 to 278 (ELSQNIKGFR…KDMQQLGTTS (263 aa)) folds into the Helicase ATP-binding domain. 51–58 (AGTGTGKT) provides a ligand contact to ATP. Cys114 serves as a coordination point for [4Fe-4S] cluster. A DEAH box motif is present at residues 125 to 128 (GVLG). [4Fe-4S] cluster contacts are provided by Cys174, Cys179, and Cys185. The short motif at 231-234 (DEAH) is the DEAH box element. A Helicase C-terminal domain is found at 458–634 (SLGEILLPVI…SRTRDLNKVI (177 aa)).

The protein belongs to the helicase family. DinG subfamily. [4Fe-4S] cluster serves as cofactor.

The enzyme catalyses Couples ATP hydrolysis with the unwinding of duplex DNA at the replication fork by translocating in the 5'-3' direction. This creates two antiparallel DNA single strands (ssDNA). The leading ssDNA polymer is the template for DNA polymerase III holoenzyme which synthesizes a continuous strand.. It catalyses the reaction ATP + H2O = ADP + phosphate + H(+). In terms of biological role, probably a 5'-3' DNA helicase. This is ATP-dependent DNA helicase YoaA from Haemophilus influenzae (strain ATCC 51907 / DSM 11121 / KW20 / Rd).